A 148-amino-acid chain; its full sequence is Methylated-DNA--protein-cysteine methyltransferase (148 aa).

Cys-90 (nucleophile; methyl group acceptor) is an active-site residue.

The protein belongs to the MGMT family.

It localises to the cytoplasm. It carries out the reaction a 6-O-methyl-2'-deoxyguanosine in DNA + L-cysteinyl-[protein] = S-methyl-L-cysteinyl-[protein] + a 2'-deoxyguanosine in DNA. The enzyme catalyses a 4-O-methyl-thymidine in DNA + L-cysteinyl-[protein] = a thymidine in DNA + S-methyl-L-cysteinyl-[protein]. Involved in the cellular defense against the biological effects of O6-methylguanine (O6-MeG) and O4-methylthymine (O4-MeT) in DNA. Repairs the methylated nucleobase in DNA by stoichiometrically transferring the methyl group to a cysteine residue in the enzyme. This is a suicide reaction: the enzyme is irreversibly inactivated. The polypeptide is Methylated-DNA--protein-cysteine methyltransferase (ogt) (Pyrobaculum aerophilum (strain ATCC 51768 / DSM 7523 / JCM 9630 / CIP 104966 / NBRC 100827 / IM2)).